We begin with the raw amino-acid sequence, 465 residues long: GTPase Der (465 aa).

EngA-type G domains lie at 3 to 166 (FLVA…LNEY) and 184 to 358 (IHFS…ACAS). GTP contacts are provided by residues 9-16 (GRANVGKS), 56-60 (DTGGI), 118-121 (NKVD), 190-197 (GRPNVGKS), 237-241 (DTAGV), and 302-305 (NKWD). One can recognise a KH-like domain in the interval 359–443 (KKITTADATR…PIVFEFKQSE (85 aa)). A disordered region spans residues 446 to 465 (FADRKNKRSKDEGSKSKKVK).

This sequence belongs to the TRAFAC class TrmE-Era-EngA-EngB-Septin-like GTPase superfamily. EngA (Der) GTPase family. Associates with the 50S ribosomal subunit.

Its function is as follows. GTPase that plays an essential role in the late steps of ribosome biogenesis. The sequence is that of GTPase Der from Francisella tularensis subsp. tularensis (strain FSC 198).